A 294-amino-acid polypeptide reads, in one-letter code: Glycine--tRNA ligase alpha subunit (294 aa).

The protein belongs to the class-II aminoacyl-tRNA synthetase family. As to quaternary structure, tetramer of two alpha and two beta subunits.

It localises to the cytoplasm. The catalysed reaction is tRNA(Gly) + glycine + ATP = glycyl-tRNA(Gly) + AMP + diphosphate. The sequence is that of Glycine--tRNA ligase alpha subunit from Lawsonia intracellularis (strain PHE/MN1-00).